The primary structure comprises 627 residues: Carene synthase 2, chloroplastic (627 aa).

Residues 1–36 (MSVISIVPLASKSCLYKSLMSSTHELKALCRPIVTL) constitute a chloroplast transit peptide. Residues Asp378, Asp382, and Asp530 each contribute to the Mg(2+) site. Positions 378–382 (DDMYD) match the DDXXD motif motif.

The protein belongs to the terpene synthase family. Tpsd subfamily. Mg(2+) is required as a cofactor. The cofactor is Mn(2+).

The protein localises to the plastid. The protein resides in the chloroplast. It carries out the reaction (2E)-geranyl diphosphate = (+)-car-3-ene + diphosphate. The protein operates within terpene metabolism; oleoresin biosynthesis. Functionally, terpene synthase (TPS) involved in defensive oleoresin formation in conifers in response to insect attack (e.g. white pine weevil P.strobi) or other injury. In Picea sitchensis (Sitka spruce), this protein is Carene synthase 2, chloroplastic (TPS-3car2).